A 378-amino-acid polypeptide reads, in one-letter code: Small RNA 2'-O-methyltransferase (378 aa).

An S-adenosyl-L-methionine-binding site is contributed by Asp-61. 4 residues coordinate Mg(2+): Glu-114, Glu-117, His-118, and His-176.

It belongs to the methyltransferase superfamily. HEN1 family. The cofactor is Mg(2+).

Its subcellular location is the cytoplasm. It catalyses the reaction small RNA 3'-end nucleotide + S-adenosyl-L-methionine = small RNA 3'-end 2'-O-methylnucleotide + S-adenosyl-L-homocysteine + H(+). Methyltransferase that adds a 2'-O-methyl group at the 3'-end of small RNAs. The protein is Small RNA 2'-O-methyltransferase of Schizosaccharomyces pombe (strain 972 / ATCC 24843) (Fission yeast).